Consider the following 205-residue polypeptide: ATP-dependent Clp protease proteolytic subunit (205 aa).

Ser98 (nucleophile) is an active-site residue. His123 is a catalytic residue.

This sequence belongs to the peptidase S14 family. Fourteen ClpP subunits assemble into 2 heptameric rings which stack back to back to give a disk-like structure with a central cavity, resembling the structure of eukaryotic proteasomes.

The protein resides in the cytoplasm. It carries out the reaction Hydrolysis of proteins to small peptides in the presence of ATP and magnesium. alpha-casein is the usual test substrate. In the absence of ATP, only oligopeptides shorter than five residues are hydrolyzed (such as succinyl-Leu-Tyr-|-NHMec, and Leu-Tyr-Leu-|-Tyr-Trp, in which cleavage of the -Tyr-|-Leu- and -Tyr-|-Trp bonds also occurs).. Its function is as follows. Cleaves peptides in various proteins in a process that requires ATP hydrolysis. Has a chymotrypsin-like activity. Plays a major role in the degradation of misfolded proteins. The sequence is that of ATP-dependent Clp protease proteolytic subunit from Desulforapulum autotrophicum (strain ATCC 43914 / DSM 3382 / VKM B-1955 / HRM2) (Desulfobacterium autotrophicum).